A 60-amino-acid polypeptide reads, in one-letter code: MAKGKENRIVITLECTEAKKEGKTVSRYTTTKNKKNTTDRLVLKKYNPSMQKHTLHKEIK.

It belongs to the bacterial ribosomal protein bL33 family.

This is Large ribosomal subunit protein bL33 from Chlorobium phaeovibrioides (strain DSM 265 / 1930) (Prosthecochloris vibrioformis (strain DSM 265)).